The following is a 230-amino-acid chain: 3,4-dihydroxy-2-butanone 4-phosphate synthase (230 aa).

Residues 42 to 43, Asp-47, 155 to 159, and Glu-179 each bind D-ribulose 5-phosphate; these read RE and RRGHT. Glu-43 serves as a coordination point for Mg(2+). Residue His-158 participates in Mg(2+) binding.

It belongs to the DHBP synthase family. Homodimer. It depends on Mg(2+) as a cofactor. Mn(2+) is required as a cofactor.

The enzyme catalyses D-ribulose 5-phosphate = (2S)-2-hydroxy-3-oxobutyl phosphate + formate + H(+). It functions in the pathway cofactor biosynthesis; riboflavin biosynthesis; 2-hydroxy-3-oxobutyl phosphate from D-ribulose 5-phosphate: step 1/1. Functionally, catalyzes the conversion of D-ribulose 5-phosphate to formate and 3,4-dihydroxy-2-butanone 4-phosphate. This is 3,4-dihydroxy-2-butanone 4-phosphate synthase from Bordetella bronchiseptica (strain ATCC BAA-588 / NCTC 13252 / RB50) (Alcaligenes bronchisepticus).